The chain runs to 175 residues: Riboflavin kinase (175 aa).

Residue 54–59 coordinates CDP; sequence GLGEGK. 2 residues coordinate Mg(2+): Thr-83 and Asn-85. FMN contacts are provided by Thr-142 and Glu-150. 155-158 contacts CDP; it reads FHLR.

It belongs to the archaeal riboflavin kinase family. Mg(2+) is required as a cofactor.

It catalyses the reaction riboflavin + CTP = CDP + FMN + H(+). It functions in the pathway cofactor biosynthesis; FMN biosynthesis; FMN from riboflavin (CTP route): step 1/1. In terms of biological role, catalyzes the CTP-dependent phosphorylation of riboflavin (vitamin B2) to form flavin mononucleotide (FMN). The chain is Riboflavin kinase from Saccharolobus solfataricus (strain ATCC 35092 / DSM 1617 / JCM 11322 / P2) (Sulfolobus solfataricus).